Consider the following 170-residue polypeptide: Macro domain-containing protein VPA0103 (170 aa).

The Macro domain maps to 1 to 170; the sequence is MNAISLVQGD…SIWQHALTQH (170 aa).

Belongs to the MacroD-type family.

The sequence is that of Macro domain-containing protein VPA0103 from Vibrio parahaemolyticus serotype O3:K6 (strain RIMD 2210633).